A 403-amino-acid polypeptide reads, in one-letter code: RNA-binding motif, single-stranded-interacting protein 1 (403 aa).

The tract at residues 30-56 is disordered; it reads PAHPMAPPSPSTTSSNNNSSSSSNSGW. Residues 40 to 54 are compositionally biased toward low complexity; sequence STTSSNNNSSSSSNS. 2 RRM domains span residues 62–135 and 141–226; these read TNLY…MAKQ and TNLY…FADG. Thr208 is subject to Phosphothreonine.

It is found in the nucleus. Functionally, single-stranded DNA binding protein that interacts with the region upstream of the MYC gene. Binds specifically to the DNA sequence motif 5'-[AT]CT[AT][AT]T-3'. Probably has a role in DNA replication. This Rattus norvegicus (Rat) protein is RNA-binding motif, single-stranded-interacting protein 1.